Consider the following 338-residue polypeptide: Anthranilate phosphoribosyltransferase (338 aa).

Residues G81, 84 to 85 (GD), S89, 91 to 94 (NIST), 109 to 117 (KHGNRSVSS), and S121 contribute to the 5-phospho-alpha-D-ribose 1-diphosphate site. G81 contacts anthranilate. S93 contacts Mg(2+). N112 is a binding site for anthranilate. R167 is a binding site for anthranilate. Mg(2+) contacts are provided by D226 and E227.

The protein belongs to the anthranilate phosphoribosyltransferase family. As to quaternary structure, homodimer. Mg(2+) serves as cofactor.

It carries out the reaction N-(5-phospho-beta-D-ribosyl)anthranilate + diphosphate = 5-phospho-alpha-D-ribose 1-diphosphate + anthranilate. Its pathway is amino-acid biosynthesis; L-tryptophan biosynthesis; L-tryptophan from chorismate: step 2/5. Catalyzes the transfer of the phosphoribosyl group of 5-phosphorylribose-1-pyrophosphate (PRPP) to anthranilate to yield N-(5'-phosphoribosyl)-anthranilate (PRA). The protein is Anthranilate phosphoribosyltransferase of Thioalkalivibrio sulfidiphilus (strain HL-EbGR7).